The following is a 182-amino-acid chain: ATP synthase subunit delta (182 aa).

Belongs to the ATPase delta chain family. F-type ATPases have 2 components, F(1) - the catalytic core - and F(0) - the membrane proton channel. F(1) has five subunits: alpha(3), beta(3), gamma(1), delta(1), epsilon(1). F(0) has three main subunits: a(1), b(2) and c(10-14). The alpha and beta chains form an alternating ring which encloses part of the gamma chain. F(1) is attached to F(0) by a central stalk formed by the gamma and epsilon chains, while a peripheral stalk is formed by the delta and b chains.

Its subcellular location is the cell membrane. Functionally, f(1)F(0) ATP synthase produces ATP from ADP in the presence of a proton or sodium gradient. F-type ATPases consist of two structural domains, F(1) containing the extramembraneous catalytic core and F(0) containing the membrane proton channel, linked together by a central stalk and a peripheral stalk. During catalysis, ATP synthesis in the catalytic domain of F(1) is coupled via a rotary mechanism of the central stalk subunits to proton translocation. Its function is as follows. This protein is part of the stalk that links CF(0) to CF(1). It either transmits conformational changes from CF(0) to CF(1) or is implicated in proton conduction. The polypeptide is ATP synthase subunit delta (Alkalihalophilus pseudofirmus (strain ATCC BAA-2126 / JCM 17055 / OF4) (Bacillus pseudofirmus)).